A 493-amino-acid chain; its full sequence is NAD(P)H dehydrogenase (quinone) (493 aa).

FAD contacts are provided by residues 12–13 (PA), 35–37 (DCD), 42–43 (AA), lysine 52, glycine 117, aspartate 317, 324–325 (LA), and tyrosine 450.

It belongs to the class-I pyridine nucleotide-disulfide oxidoreductase family. Homotetramer. The cofactor is FAD.

The catalysed reaction is a quinone + NADH + H(+) = a quinol + NAD(+). It carries out the reaction a quinone + NADPH + H(+) = a quinol + NADP(+). May contribute to virulence by increasing resistance to reactive oxygen intermediates. It can reduce 2,6-dimethyl-1,4-benzoquinone (DMBQ), 5-hydroxy-1,4-naphthaquinone (5-HNQ) and menadione. In Mycobacterium tuberculosis (strain CDC 1551 / Oshkosh), this protein is NAD(P)H dehydrogenase (quinone) (lpdA).